The primary structure comprises 338 residues: Methionine import ATP-binding protein MetN 1 (338 aa).

One can recognise an ABC transporter domain in the interval 2-241 (IEVRSVTKRF…PHSELGVGLL (240 aa)). Position 38–45 (38–45 (GQSGAGKT)) interacts with ATP.

The protein belongs to the ABC transporter superfamily. Methionine importer (TC 3.A.1.24) family. The complex is composed of two ATP-binding proteins (MetN), two transmembrane proteins (MetI) and a solute-binding protein (MetQ).

Its subcellular location is the cell membrane. It catalyses the reaction L-methionine(out) + ATP + H2O = L-methionine(in) + ADP + phosphate + H(+). The catalysed reaction is D-methionine(out) + ATP + H2O = D-methionine(in) + ADP + phosphate + H(+). Its function is as follows. Part of the ABC transporter complex MetNIQ involved in methionine import. Responsible for energy coupling to the transport system. This Rhodococcus jostii (strain RHA1) protein is Methionine import ATP-binding protein MetN 1.